A 384-amino-acid polypeptide reads, in one-letter code: Proteinase K (384 aa).

A signal peptide spans 1–15; that stretch reads MRLSVLLSLLPLALG. The propeptide occupies 16 to 105; it reads APAVEQRSEA…IEQDAVVTIN (90 aa). In terms of domain architecture, Inhibitor I9 spans 39 to 104; it reads KYIVKFKEGS…YIEQDAVVTI (66 aa). The Peptidase S8 domain occupies 112 to 384; the sequence is PWGLARISST…NLLAYNNYQA (273 aa). Residue T121 coordinates Ca(2+). A disulfide bridge links C139 with C228. Residues D144 and H174 each act as charge relay system in the active site. Ca(2+)-binding residues include P280, V282, and D305. Residues C283 and C354 are joined by a disulfide bond. The active-site Charge relay system is S329. D365 serves as a coordination point for Ca(2+).

It belongs to the peptidase S8 family. Ca(2+) is required as a cofactor.

It catalyses the reaction Hydrolysis of keratin, and of other proteins with subtilisin-like specificity. Hydrolyzes peptide amides.. In terms of biological role, hydrolyzes keratin at aromatic and hydrophobic residues. In Parengyodontium album (Tritirachium album), this protein is Proteinase K (PROK).